A 117-amino-acid chain; its full sequence is Hydrogenase maturation factor HypA (117 aa).

His2 is a Ni(2+) binding site. Residues Cys74, Cys77, Cys91, and Cys94 each coordinate Zn(2+).

It belongs to the HypA/HybF family.

In terms of biological role, involved in the maturation of [NiFe] hydrogenases. Required for nickel insertion into the metal center of the hydrogenase. The sequence is that of Hydrogenase maturation factor HypA from Helicobacter pylori (strain J99 / ATCC 700824) (Campylobacter pylori J99).